The primary structure comprises 260 residues: MMWSNFFLQEENRRRGAAGRRRAHGQGRSGLTPEREGKVKLALLLAAVGATLAVLSVGTEFWVELNTYKANGSAVCEAAHLGLWKACTKRLWQADVPVDRDTCGPAELPGEANCTYFKFFTTGENARIFQRTTKKEVNLAAAVIAVLGLAVMALGCLCIIMVLSKGAEFLLRVGAVCFGLSGLLLLVSLEVFRHSVRALLQRVSPEPPPAPRLTYEYSWSLGCGVGAGLILLLGAGCFLLLTLPSWPWGSLCPKRGHRAT.

The segment at 14–33 (RRGAAGRRRAHGQGRSGLTP) is disordered. Over residues 15–25 (RGAAGRRRAHG) the composition is skewed to basic residues. Transmembrane regions (helical) follow at residues 43 to 63 (LLLAAVGATLAVLSVGTEFWV), 143 to 163 (VIAVLGLAVMALGCLCIIMVL), 169 to 189 (FLLRVGAVCFGLSGLLLLVSL), and 221 to 241 (LGCGVGAGLILLLGAGCFLLL).

This sequence belongs to the PMP-22/EMP/MP20 family. CACNG subfamily. Interacts with CACNA1C. Identified in a complex with the L-type calcium channel subunits CACNA1C, CACNA2D1 and either CACNB1 or CACNB2. Detected in heart left ventricle.

The protein resides in the cell membrane. Its function is as follows. Regulates the activity of L-type calcium channels that contain CACNA1C as pore-forming subunit. This chain is Voltage-dependent calcium channel gamma-6 subunit (CACNG6), found in Homo sapiens (Human).